Here is a 323-residue protein sequence, read N- to C-terminus: Calcium homeostasis modulator protein 2 (323 aa).

The Cytoplasmic segment spans residues 1-21 (MAALIAENFRFLSLFFKSKDV). The tract at residues 14–39 (LFFKSKDVMIFNGLVALGTVGSQELF) is central pore. A helical transmembrane segment spans residues 22–43 (MIFNGLVALGTVGSQELFSVVA). Over 44–52 (FHCPCSPAR) the chain is Extracellular. 2 disulfide bridges follow: C46–C130 and C48–C162. The chain crosses the membrane as a helical span at residues 53-76 (NYLYGLTAIGVPALALFLIGVILN). At 77-101 (NHTWNLVAECQYRRAKNCSAAPTFL) the chain is on the cytoplasmic side. The chain crosses the membrane as a helical span at residues 102 to 132 (LLSSILGRAAVAPVTWSVISLLRGEAYVCAL). Over 133 to 179 (SEFVDPSSLTAGDEGFPPDHATEILARFPCGEGPANLSGFREEVSRR) the chain is Extracellular. A hemichannel docking region spans residues 145 to 152 (DEGFPPDH). A helical membrane pass occupies residues 180–206 (LKYESQLFGWLLIGVVAILVFLTKCFK). Over 207-323 (HYCSPLSYRQ…DNVEMALLTV (117 aa)) the chain is Cytoplasmic. Residues 214–251 (YRQEAYWAQYRTNEDQLFQRTAEVHSRVLAANNVRRFF) form an intersubunit interaction region.

Belongs to the CALHM family. In terms of assembly, homo-undecamer. Two undecameric hemichannels can assemble in a head-to-head manner to form a gap junction.

It localises to the cell membrane. It catalyses the reaction ATP(in) = ATP(out). Pore-forming subunit of Ca(2+) homeostasis modulator channels. Mediates ATP release from astrocytes and ATP-induced Ca(2+) influx in microglia thus regulating neuronal ATP and Ca(2+) homeostasis, synaptic transmission and neuroinflammatory response. May form intercellular gap junctions. The gating mechanism remains unknown. This chain is Calcium homeostasis modulator protein 2 (Calhm2), found in Rattus norvegicus (Rat).